Here is a 379-residue protein sequence, read N- to C-terminus: Putative thylakoid lumen peptidyl-prolyl cis-trans isomerase sll0408 (379 aa).

The signal sequence occupies residues 1-33 (MQIIKTPLGIITRRGLQLSLLSLLLTMLSLTWA). The region spanning 190–378 (GRATVEMTTN…SGADNLVNGN (189 aa)) is the PPIase cyclophilin-type domain.

Its subcellular location is the cellular thylakoid lumen. The catalysed reaction is [protein]-peptidylproline (omega=180) = [protein]-peptidylproline (omega=0). In terms of biological role, PPIases accelerate the folding of proteins. It catalyzes the cis-trans isomerization of proline imidic peptide bonds in oligopeptides. Required for the assembly and stabilization of PSII. The protein is Putative thylakoid lumen peptidyl-prolyl cis-trans isomerase sll0408 of Synechocystis sp. (strain ATCC 27184 / PCC 6803 / Kazusa).